We begin with the raw amino-acid sequence, 825 residues long: NT-3 growth factor receptor (825 aa).

Residues 1 to 31 (MDVSLCPAKCSFWRIFLLGSVWLDYVGSVLA) form the signal peptide. Disulfide bonds link C32/C38 and C36/C45. The Extracellular portion of the chain corresponds to 32–429 (CPANCVCSKT…TVTHKPEEDT (398 aa)). N-linked (GlcNAc...) asparagine glycans are attached at residues N68, N72, and N79. 2 LRR repeats span residues 104–125 (GLQKLTIKNSGLRNIQPRAFAK) and 128–149 (HLRYINLSSNRLTTLSWQLFQT). N-linked (GlcNAc...) asparagine glycosylation is found at N133 and N163. In terms of domain architecture, LRRCT spans 160–209 (NFFNCSCDIRWMQLWQEQGEARLDSQSLYCISADGSQLPLFRMNISQCDL). 2 disulfide bridges follow: C164-C189 and C166-C207. N-linked (GlcNAc...) asparagine glycosylation is found at N203, N218, N232, N259, N267, N272, and N294. Ig-like C2-type domains are found at residues 210–300 (PEIS…VALT) and 309–382 (SLVE…IAKN). A disulfide bridge links C231 with C284. A disulfide bridge connects residues C320 and C362. Residues N375 and N388 are each glycosylated (N-linked (GlcNAc...) asparagine). A helical transmembrane segment spans residues 430-453 (FGVSIAVGLAAFACVLLVVLFIMI). Topologically, residues 454–825 (NKYGRRSKFG…ATPIYLDILG (372 aa)) are cytoplasmic. Phosphoserine is present on S493. Phosphotyrosine is present on Y516. One can recognise a Protein kinase domain in the interval 538-825 (IVLKRELGEG…ATPIYLDILG (288 aa)). ATP-binding positions include 544–552 (LGEGAFGKV) and K572. Residue D679 is the Proton acceptor of the active site. A phosphotyrosine; by autocatalysis mark is found at Y705, Y709, and Y710.

The protein belongs to the protein kinase superfamily. Tyr protein kinase family. Insulin receptor subfamily. As to quaternary structure, exists in a dynamic equilibrium between monomeric (low affinity) and dimeric (high affinity) structures. Binds SH2B2. Interacts with SQSTM1 and KIDINS220. Interacts with PTPRS. Interacts with MAPK8IP3/JIP3. In terms of processing, ligand-mediated auto-phosphorylation. Isoform 2 expression is restricted to specific areas in adult brain. Isoform 3 transcripts are readily detected early during embryogenesis and are expressed predominantly in adult brain and gonads.

It localises to the membrane. It carries out the reaction L-tyrosyl-[protein] + ATP = O-phospho-L-tyrosyl-[protein] + ADP + H(+). Its function is as follows. Receptor tyrosine kinase involved in nervous system and probably heart development. Upon binding of its ligand NTF3/neurotrophin-3, NTRK3 autophosphorylates and activates different signaling pathways, including the phosphatidylinositol 3-kinase/AKT and the MAPK pathways, that control cell survival and differentiation. This is NT-3 growth factor receptor (Ntrk3) from Mus musculus (Mouse).